Consider the following 103-residue polypeptide: Large ribosomal subunit protein bL21 (103 aa).

It belongs to the bacterial ribosomal protein bL21 family. Part of the 50S ribosomal subunit. Contacts protein L20.

This protein binds to 23S rRNA in the presence of protein L20. The protein is Large ribosomal subunit protein bL21 of Clostridium beijerinckii (strain ATCC 51743 / NCIMB 8052) (Clostridium acetobutylicum).